We begin with the raw amino-acid sequence, 137 residues long: Nucleoside diphosphate kinase (137 aa).

Residues lysine 10, phenylalanine 59, arginine 87, threonine 93, arginine 104, and asparagine 114 each coordinate ATP. Catalysis depends on histidine 117, which acts as the Pros-phosphohistidine intermediate.

It belongs to the NDK family. In terms of assembly, homotetramer. Requires Mg(2+) as cofactor.

It is found in the cytoplasm. The catalysed reaction is a 2'-deoxyribonucleoside 5'-diphosphate + ATP = a 2'-deoxyribonucleoside 5'-triphosphate + ADP. It carries out the reaction a ribonucleoside 5'-diphosphate + ATP = a ribonucleoside 5'-triphosphate + ADP. In terms of biological role, major role in the synthesis of nucleoside triphosphates other than ATP. The ATP gamma phosphate is transferred to the NDP beta phosphate via a ping-pong mechanism, using a phosphorylated active-site intermediate. The protein is Nucleoside diphosphate kinase of Streptomyces griseus subsp. griseus (strain JCM 4626 / CBS 651.72 / NBRC 13350 / KCC S-0626 / ISP 5235).